The sequence spans 404 residues: Pleckstrin homology domain-containing family A member 1 (404 aa).

2 PH domains span residues 7–112 (QNRI…KAIK) and 191–289 (AVIK…GAIV). Disordered regions lie at residues 291–332 (QRGP…RSNS) and 355–404 (NFKV…VSDV). Positions 316 to 332 (TNAATATSHSTASRSNS) are enriched in low complexity. Phosphoserine occurs at positions 332 and 362.

As to quaternary structure, interacts with MPDZ and PTPN13. Highly expressed in skeletal muscle, thymus, pancreas, placenta and lung. Detected at low levels in brain, heart, peripheral blood leukocytes, testis, ovary, spinal cord, thyroid, kidney, liver, small intestine and colon.

It localises to the cytoplasm. Its subcellular location is the cell membrane. The protein resides in the nucleus. Its function is as follows. Binds specifically to phosphatidylinositol 3,4-diphosphate (PtdIns3,4P2), but not to other phosphoinositides. May recruit other proteins to the plasma membrane. This is Pleckstrin homology domain-containing family A member 1 (PLEKHA1) from Homo sapiens (Human).